The primary structure comprises 395 residues: tRNA (guanine-N(7)-)-methyltransferase (395 aa).

The S-adenosyl-L-methionine site is built by Glu-126, Glu-151, and Asp-178. The substrate site is built by Lys-204 and Asp-234.

Belongs to the class I-like SAM-binding methyltransferase superfamily. TrmB family.

It carries out the reaction guanosine(46) in tRNA + S-adenosyl-L-methionine = N(7)-methylguanosine(46) in tRNA + S-adenosyl-L-homocysteine. It functions in the pathway tRNA modification; N(7)-methylguanine-tRNA biosynthesis. Its function is as follows. Catalyzes the formation of N(7)-methylguanine at position 46 (m7G46) in tRNA. This chain is tRNA (guanine-N(7)-)-methyltransferase, found in Campylobacter fetus subsp. fetus (strain 82-40).